A 100-amino-acid chain; its full sequence is Probable DNA-binding protein HU (100 aa).

The protein belongs to the bacterial histone-like protein family.

Its function is as follows. Histone-like DNA-binding protein which is capable of wrapping DNA to stabilize it, and thus to prevent its denaturation under extreme environmental conditions. The polypeptide is Probable DNA-binding protein HU (hup) (Chlamydia pneumoniae (Chlamydophila pneumoniae)).